We begin with the raw amino-acid sequence, 591 residues long: Phosphoglucan phosphatase LSF1, chloroplastic (591 aa).

A chloroplast-targeting transit peptide spans 1–61 (MAFLQQISGL…RRRRVVLRVV (61 aa)). The region spanning 291 to 453 (RYSKITEQIY…VDDGKHDGTP (163 aa)) is the Tyrosine-protein phosphatase domain. Cys390 serves as the catalytic Phosphocysteine intermediate. 390-396 (CTTGFDR) serves as a coordination point for substrate.

The protein localises to the plastid. It localises to the chloroplast. Starch granule-associated phosphoglucan phosphatase involved in the control of starch accumulation. Participates in the regulation of the initial steps of starch degradation at the granule surface. May release a different set of phosphate groups from those removed by DSP4. In Arabidopsis thaliana (Mouse-ear cress), this protein is Phosphoglucan phosphatase LSF1, chloroplastic (LSF1).